A 189-amino-acid chain; its full sequence is Ribosome maturation factor RimP (189 aa).

It belongs to the RimP family.

It localises to the cytoplasm. In terms of biological role, required for maturation of 30S ribosomal subunits. This Mycobacteroides abscessus (strain ATCC 19977 / DSM 44196 / CCUG 20993 / CIP 104536 / JCM 13569 / NCTC 13031 / TMC 1543 / L948) (Mycobacterium abscessus) protein is Ribosome maturation factor RimP.